Consider the following 256-residue polypeptide: Nuclear shuttle protein (256 aa).

The Bipartite nuclear localization signal motif lies at 21–42 (YQGFRRTAIVTRHDGKRRQHQS). The Nuclear localization signal motif lies at 81-96 (QLGKIEPNRCRSYIKL). The tract at residues 150 to 187 (ELFGARINSHGNLAVMPSLKDRFYIRHLLKRVLSVDKD) is interaction with Arabidopsis thaliana NSI protein.

This sequence belongs to the begomovirus nuclear shuttle protein family. In terms of assembly, binds to single-stranded and double-stranded viral DNA. Interacts with the host nuclear shuttle interacting (NSI) protein. This interaction may allow NSP to recruit NSI monomers to the viral genome and thus regulate nuclear export of viral genome by NSP.

The protein localises to the host nucleus. Its subcellular location is the host cytoplasm. The protein resides in the host cell membrane. In terms of biological role, binds to the genomic viral ssDNA, shuttles it into and out of the cell nucleus. Begomoviruses use 2 proteins to transport their DNA from cell to cell. The nuclear shuttle protein (NSP) shuttles it between nucleus and cytoplasm and the movement protein (MP) probably transports the DNA-NSP complex to the cell periphery and facilitates movement across the cell wall. The protein is Nuclear shuttle protein of Macroptilium lathyroides (Lima bean).